The chain runs to 320 residues: Phosphatidylserine decarboxylase proenzyme (320 aa).

Active-site charge relay system; for autoendoproteolytic cleavage activity residues include D90, H147, and S254. S254 (schiff-base intermediate with substrate; via pyruvic acid; for decarboxylase activity) is an active-site residue. S254 bears the Pyruvic acid (Ser); by autocatalysis mark. The disordered stretch occupies residues 288–320 (EASTAAEPAPLPEEEIRAEHRASPLVDDTQDQG).

Belongs to the phosphatidylserine decarboxylase family. PSD-B subfamily. Prokaryotic type I sub-subfamily. As to quaternary structure, heterodimer of a large membrane-associated beta subunit and a small pyruvoyl-containing alpha subunit. Pyruvate serves as cofactor. Is synthesized initially as an inactive proenzyme. Formation of the active enzyme involves a self-maturation process in which the active site pyruvoyl group is generated from an internal serine residue via an autocatalytic post-translational modification. Two non-identical subunits are generated from the proenzyme in this reaction, and the pyruvate is formed at the N-terminus of the alpha chain, which is derived from the carboxyl end of the proenzyme. The autoendoproteolytic cleavage occurs by a canonical serine protease mechanism, in which the side chain hydroxyl group of the serine supplies its oxygen atom to form the C-terminus of the beta chain, while the remainder of the serine residue undergoes an oxidative deamination to produce ammonia and the pyruvoyl prosthetic group on the alpha chain. During this reaction, the Ser that is part of the protease active site of the proenzyme becomes the pyruvoyl prosthetic group, which constitutes an essential element of the active site of the mature decarboxylase.

Its subcellular location is the cell membrane. The enzyme catalyses a 1,2-diacyl-sn-glycero-3-phospho-L-serine + H(+) = a 1,2-diacyl-sn-glycero-3-phosphoethanolamine + CO2. Its pathway is phospholipid metabolism; phosphatidylethanolamine biosynthesis; phosphatidylethanolamine from CDP-diacylglycerol: step 2/2. Its function is as follows. Catalyzes the formation of phosphatidylethanolamine (PtdEtn) from phosphatidylserine (PtdSer). This chain is Phosphatidylserine decarboxylase proenzyme, found in Klebsiella pneumoniae (strain 342).